The following is a 599-amino-acid chain: Estrogen receptor (599 aa).

The modulating (transactivation AF-1); mediates interaction with MACROD1 stretch occupies residues 1 to 188; the sequence is MTMTLHTKAS…IMESAKETRY (188 aa). An O-linked (GlcNAc) serine glycan is attached at serine 10. Positions 35-47 are required for interaction with NCOA1; it reads MERALGEVYVDNS. The segment at 35–178 is interaction with DDX5; self-association; sequence MERALGEVYV…LSSSNEKGNM (144 aa). Threonine 50 carries an O-linked (GlcNAc) threonine glycan. Serine 108 and serine 110 each carry phosphoserine; by CDK2. At serine 122 the chain carries Phosphoserine. The disordered stretch occupies residues 147 to 175; it reads DTGPPAFYRSNSDNRRQNGRERLSSSNEK. The segment covering 158-169 has biased composition (basic and acidic residues); that stretch reads SDNRRQNGRERL. Serine 171 bears the Phosphoserine; by CK2 mark. 2 NR C4-type zinc fingers span residues 189 to 209 and 225 to 249; these read CAVC…CEGC and CPAT…LRKC. Positions 189 to 254 form a DNA-binding region, nuclear receptor; sequence CAVCNDYASG…RLRKCYEVGM (66 aa). The mediates interaction with DNTTIP2 stretch occupies residues 189 to 314; sequence CAVCNDYASG…TKKNSPALSL (126 aa). Residues 255-314 form a hinge region; sequence MKGGIRKDRRGGRMLKHKRQRDDLEGRNEMGASGDMRAANLWPSPLVIKHTKKNSPALSL. Asymmetric dimethylarginine; by PRMT1 is present on arginine 264. The interaction with AKAP13 stretch occupies residues 266-599; that stretch reads GRMLKHKRQR…PEAEGFPNTI (334 aa). The segment at 268 to 599 is self-association; it reads MLKHKRQRDD…PEAEGFPNTI (332 aa). The NR LBD domain occupies 315–551; that stretch reads TADQMVSALL…DLLLEMLDAH (237 aa). Positions 315-599 are transactivation AF-2; it reads TADQMVSALL…PEAEGFPNTI (285 aa). 17beta-estradiol contacts are provided by glutamate 357 and arginine 398. Residue cysteine 451 is the site of S-palmitoyl cysteine attachment. Residue histidine 528 coordinates 17beta-estradiol. Tyrosine 541 carries the phosphotyrosine; by Tyr-kinases modification. The interval 557 to 581 is disordered; it reads ASRMGVPPEEPSQTQLATTSSTSAH. Residues 568-581 are compositionally biased toward low complexity; it reads SQTQLATTSSTSAH. O-linked (GlcNAc) threonine glycosylation is present at threonine 575.

Belongs to the nuclear hormone receptor family. NR3 subfamily. Interacts with BCAS3. Binds DNA as a homodimer. Can form a heterodimer with ESR2. Interacts with coactivator NCOA5. Interacts with PELP1, the interaction is enhanced by 17-beta-estradiol; the interaction increases ESR1 transcriptional activity. Interacts with NCOA7; the interaction is ligand-inducible. Interacts with AKAP13, CUEDC2, HEXIM1, KDM5A, MAP1S, SMARD1, and UBE1C. Interacts with MUC1; the interaction is stimulated by 7 beta-estradiol (E2) and enhances ESR1-mediated transcription. Interacts with DNTTIP2, and UIMC1. Interacts with KMT2D/MLL2. Interacts with ATAD2; the interaction is enhanced by estradiol. Interacts with KIF18A and LDB1. Interacts with RLIM (via its C-terminus). Interacts with MACROD1. Interacts with SH2D4A and PLCG. Interacts with SH2D4A; the interaction blocks binding to PLCG and inhibits estrogen-induced cell proliferation. Interacts with DYNLL1. Interacts with CCDC62; the interaction requires estradiol and appears to enhance the transcription of target genes. Interacts with NR2C1; the interaction prevents homodimerization of ESR1 and suppresses its transcriptional activity and cell growth. Interacts with DNAAF4. Interacts with PRMT2. Interacts with RBFOX2. Interacts with EP300; the interaction is estrogen-dependent and enhanced by CITED1. Interacts with CITED1; the interaction is estrogen-dependent. Interacts with FAM120B, FOXL2, PHB2 and SLC30A9. Interacts with coactivators NCOA3 and NCOA6. Interacts with STK3/MST2 only in the presence of SAV1 and vice-versa. Binds to CSNK1D. Interacts with NCOA2; NCOA2 can interact with ESR1 AF-1 and AF-2 domains simultaneously and mediate their transcriptional synergy. Interacts with DDX5. Interacts with NCOA1; the interaction seems to require a self-association of N-terminal and C-terminal regions. Interacts with ZNF366, DDX17, NFKB1, RELA, SP1 and SP3. Interacts with NRIP1. Interacts with GPER1; the interaction occurs in an estrogen-dependent manner. Interacts with CLOCK and the interaction is stimulated by estrogen. Interacts with BCAS3. Interacts with TRIP4 (ufmylated); estrogen dependent. Interacts with LMTK3; the interaction phosphorylates ESR1 (in vitro) and protects it against proteasomal degradation. Interacts with CCAR2 (via N-terminus) in a ligand-independent manner. Interacts with ZFHX3. Interacts with SFR1 in a ligand-dependent and -independent manner. Interacts with DCAF13, LATS1 and DCAF1; regulates ESR1 ubiquitination and ubiquitin-mediated proteasomal degradation. Interacts (via DNA-binding domain) with POU4F2 isoform 2 (C-terminus); this interaction increases the estrogen receptor ESR1 transcriptional activity in a DNA- and ligand 17-beta-estradiol-independent manner. Interacts with ESRRB isoform 1. Interacts with UBE3A and WBP2. Interacts with GTF2B. Interacts with RBM39. In the absence of hormonal ligand, interacts with TACC1. Interacts with PI3KR1 or PI3KR2 and PTK2/FAK1. Interacts with SRC. Interacts with BAG1; the interaction is promoted in the absence of estradiol (17-beta-estradiol/E2). Interacts with and ubiquitinated by STUB1; the interaction is promoted in the absence of estradiol (17-beta-estradiol/E2). Interacts with NEDD8. In terms of processing, phosphorylated by cyclin A/CDK2 and CK1. Phosphorylation probably enhances transcriptional activity. Dephosphorylation at Ser-122 by PPP5C inhibits its transactivation activity. Phosphorylated by LMTK3 (in vitro). Ubiquitinated. Deubiquitinated by OTUB1. Post-translationally, palmitoylated at Cys-451 by ZDHHC7 and ZDHHC21. This modification is required for plasma membrane targeting and for rapid intracellular signaling via ERK and AKT kinases and cAMP generation, but not for signaling mediated by the nuclear hormone receptor. In terms of processing, ubiquitinated; regulated by LATS1 via DCAF1 it leads to ESR1 proteasomal degradation. Deubiquitinated by OTUB1. Ubiquitinated by STUB1/CHIP; in the CA1 hippocampal region following loss of endogenous circulating estradiol (17-beta-estradiol/E2). Ubiquitinated by UBR5, leading to its degradation: UBR5 specifically recognizes and binds ligand-bound ESR1 when it is not associated with coactivators (NCOAs). In presence of NCOAs, the UBR5-degron is not accessible, preventing its ubiquitination and degradation. Dimethylated by PRMT1 at Arg-264. The methylation may favor cytoplasmic localization. Demethylated by JMJD6 at Arg-264.

Its subcellular location is the nucleus. The protein resides in the cytoplasm. The protein localises to the golgi apparatus. It localises to the cell membrane. Functionally, nuclear hormone receptor. The steroid hormones and their receptors are involved in the regulation of eukaryotic gene expression and affect cellular proliferation and differentiation in target tissues. Ligand-dependent nuclear transactivation involves either direct homodimer binding to a palindromic estrogen response element (ERE) sequence or association with other DNA-binding transcription factors, such as AP-1/c-Jun, c-Fos, ATF-2, Sp1 and Sp3, to mediate ERE-independent signaling. Ligand binding induces a conformational change allowing subsequent or combinatorial association with multiprotein coactivator complexes through LXXLL motifs of their respective components. Mutual transrepression occurs between the estrogen receptor (ER) and NF-kappa-B in a cell-type specific manner. Decreases NF-kappa-B DNA-binding activity and inhibits NF-kappa-B-mediated transcription from the IL6 promoter and displace RELA/p65 and associated coregulators from the promoter. Recruited to the NF-kappa-B response element of the CCL2 and IL8 promoters and can displace CREBBP. Present with NF-kappa-B components RELA/p65 and NFKB1/p50 on ERE sequences. Can also act synergistically with NF-kappa-B to activate transcription involving respective recruitment adjacent response elements; the function involves CREBBP. Can activate the transcriptional activity of TFF1. Also mediates membrane-initiated estrogen signaling involving various kinase cascades. Essential for MTA1-mediated transcriptional regulation of BRCA1 and BCAS3. Maintains neuronal survival in response to ischemic reperfusion injury when in the presence of circulating estradiol (17-beta-estradiol/E2). The protein is Estrogen receptor (Esr1) of Mus musculus (Mouse).